A 606-amino-acid polypeptide reads, in one-letter code: MAESGGSSGSSQSPERPSSLADRNGALKCTFSAAGHSTGLLQGLAALRAQGQLLDVVLTVNSEAFHAHKVVLAACSDYFRAMFTGGMREANQAVIQLQGVSARGLRHIIDFAYSAEVTLDLDCVQDVLGAAVFLQMLPVVELCEDFLKAAMSVETCLHIGQMATTFSLTSLRESVDAFTFRHFLQIAAEEDFLRLPLERLVFFLQSNRLQSCAEIDLFRAAVRWLQHDPARRARASLVLRHVRFPLMQPAELVDSVQTLDVMLDDALCRQYLLEAFSYHVLPCRQHDMQSPRTAVRSDVASLVAFGGTPYTDSDRAVSSKVFQLPEPGARHFRELTEMELGCSHAGVAVLDNFVYVAGGQHLQHRSGEGAVDACYRYDPQRNRWLRLRALRESRVQFQLTALGGLLYATGGRNRAGSLASVERYCPRRDSWDFACPLKRRTWGHAGAAAAGRLYISGGYGVSAEDKKALQCYDPAADRWEPRAPMREPRVLHAMLGAAGRIYALGGRMDHVDRCFDVLAVEYYVPDADQWTSVTPMRAGQSEAGCCLLERKIYIVGGYNWRLNNVTGIVQVYNTETDEWERDLHFPESFAGIACAAVLLPRSGHGR.

Over residues methionine 1 to serine 19 the composition is skewed to low complexity. The disordered stretch occupies residues methionine 1–leucine 20. N-acetylalanine is present on alanine 2. The BTB domain maps to leucine 54–leucine 121. The BACK domain maps to cysteine 156–glutamine 257. 6 Kelch repeats span residues serine 301–asparagine 352, phenylalanine 353–glycine 404, leucine 406–glycine 451, arginine 452–glycine 499, isoleucine 501–arginine 550, and isoleucine 552–leucine 599. Position 430 is a phosphoserine (serine 430).

May play a role in endo(sarco)plasmic reticulum (ER/SR) mitochondrial signaling. May be part of the ubiquitin-proteasome system (UPS) and affect ubiquitination and degradation of target substrates in cardiomyocytes. The protein is Kelch-like protein 26 (Klhl26) of Mus musculus (Mouse).